We begin with the raw amino-acid sequence, 401 residues long: Beta-ketoadipyl-CoA thiolase (401 aa).

The active-site Acyl-thioester intermediate is the cysteine 90. Active-site proton acceptor residues include histidine 357 and cysteine 387.

It belongs to the thiolase-like superfamily. Thiolase family.

It carries out the reaction succinyl-CoA + acetyl-CoA = 3-oxoadipyl-CoA + CoA. Its pathway is aromatic compound metabolism; phenylacetate degradation. Its function is as follows. Catalyzes thiolytic cleavage of beta-ketoadipyl-CoA to succinyl-CoA and acetyl-CoA. This is Beta-ketoadipyl-CoA thiolase (paaJ) from Escherichia coli.